The primary structure comprises 210 residues: Inner membrane-spanning protein YciB (210 aa).

Helical transmembrane passes span 12 to 32, 53 to 73, 78 to 98, 115 to 135, 153 to 173, and 175 to 195; these read EVSP…FFFA, IFIA…VSWM, LPMM…LTLW, LFGA…GYVF, WGVF…SFST, and FWVA…TLAQ.

It belongs to the YciB family.

It is found in the cell inner membrane. In terms of biological role, plays a role in cell envelope biogenesis, maintenance of cell envelope integrity and membrane homeostasis. This is Inner membrane-spanning protein YciB from Sinorhizobium medicae (strain WSM419) (Ensifer medicae).